A 181-amino-acid chain; its full sequence is SecB-like chaperone MT2006 (181 aa).

Belongs to the SecB-like family. In terms of assembly, homotetramer, interacts with antitoxin HigA1.

Functionally, chaperone component of an atypical, type II toxin-antitoxin chaperone (TAC) module, probably required for antitoxin HigA1 to neutralize its cognate toxin HigB1. The protein is SecB-like chaperone MT2006 (secBL) of Mycobacterium tuberculosis (strain CDC 1551 / Oshkosh).